The following is a 460-amino-acid chain: Cysteine--tRNA ligase (460 aa).

Position 28 (Cys28) interacts with Zn(2+). Positions 30–40 (MTVYDYCHLGH) match the 'HIGH' region motif. 3 residues coordinate Zn(2+): Cys209, His234, and Glu238. The 'KMSKS' region motif lies at 266 to 270 (KMSKS). Position 269 (Lys269) interacts with ATP.

This sequence belongs to the class-I aminoacyl-tRNA synthetase family. Monomer. Zn(2+) serves as cofactor.

It is found in the cytoplasm. The enzyme catalyses tRNA(Cys) + L-cysteine + ATP = L-cysteinyl-tRNA(Cys) + AMP + diphosphate. The polypeptide is Cysteine--tRNA ligase (Pseudomonas paraeruginosa (strain DSM 24068 / PA7) (Pseudomonas aeruginosa (strain PA7))).